A 118-amino-acid chain; its full sequence is Large ribosomal subunit protein bL20 (118 aa).

Belongs to the bacterial ribosomal protein bL20 family.

Binds directly to 23S ribosomal RNA and is necessary for the in vitro assembly process of the 50S ribosomal subunit. It is not involved in the protein synthesizing functions of that subunit. This Staphylococcus carnosus (strain TM300) protein is Large ribosomal subunit protein bL20.